A 2069-amino-acid polypeptide reads, in one-letter code: MSQPPLLPASAETRKFTRALSKPGTAAELRQSVSEVVRGSVLLAKPKLIEPLDYENVIVQKKTQILNDCLREMLLFPYDDFQTAILRRQGRYICSTVPAKAEEEAQSLFVTECIKTYNSDWHLVNYKYEDYSGEFRQLPNKVVKLDKLPVHVYEVDEEVDKDEDAASLGSQKGGITKHGWLYKGNMNSAISVTMRSFKRRFFHLIQLGDGSYNLNFYKDEKISKEPKGSIFLDSCMGVVQNNKVRRFAFELKMQDKSSYLLAADSEVEMEEWITILNKILQLNFEAAMQEKRNGDSHEDDEQSKLEGSGSGLDSYLPELAKSAREAEIKLKSESRVKLFYLDPDAQKLDFSSAEPEVKSFEEKFGKRILVKCNDLSFNLQCCVAENEEGPTTNVEPFFVTLSLFDIKYNRKISADFHVDLNHFSVRQMLATTSPALMNGSGQSPSVLKGILHEAAMQYPKQGIFSVTCPHPDIFLVARIEKVLQGSITHCAEPYMKSSDSSKVAQKVLKNAKQACQRLGQYRMPFAWAARTLFKDASGNLDKNARFSAIYRQDSNKLSNDDMLKLLADFRKPEKMAKLPVILGNLDITIDNVSSDFPNYVNSSYIPTKQFETCSKTPITFEVEEFVPCIPKHTQPYTIYTNHLYVYPKYLKYDSQKSFAKARNIAICIEFKDSDEEDSQPLKCIYGRPGGPVFTRSAFAAVLHHHQNPEFYDEIKIELPTQLHEKHHLLLTFFHVSCDNSSKGSTKKRDVVETQVGYSWLPLLKDGRVVTSEQHIPVSANLPSGYLGYQELGMGRHYGPEIKWVDGGKPLLKISTHLVSTVYTQDQHLHNFFQYCQKTESGAQALGNELVKYLKSLHAMEGHVMIAFLPTILNQLFRVLTRATQEEVAVNVTRVIIHVVAQCHEEGLESHLRSYVKYAYKAEPYVASEYKTVHEELTKSMTTILKPSADFLTSNKLLKYSWFFFDVLIKSMAQHLIENSKVKLLRNQRFPASYHHAVETVVNMLMPHITQKFRDNPEASKNANHSLAVFIKRCFTFMDRGFVFKQINNYISCFAPGDPKTLFEYKFEFLRVVCNHEHYIPLNLPMPFGKGRIQRYQDLQLDYSLTDEFCRNHFLVGLLLREVGTALQEFREVRLIAISVLKNLLIKHSFDDRYASRSHQARIATLYLPLFGLLIENVQRINVRDVSPFPVNAGMTVKDESLALPAVNPLVTPQKGSTLDNSLHKDLLGAISGIASPYTTSTPNINSVRNADSRGSLISTDSGNSLPERNSEKSNSLDKHQQSSTLGNSVVRCDKLDQSEIKSLLMCFLYILKSMSDDALFTYWNKASTSELMDFFTISEVCLHQFQYMGKRYIARTGMMHARLQQLGSLDNSLTFNHSYGHSDADVLHQSLLEANIATEVCLTALDTLSLFTLAFKNQLLADHGHNPLMKKVFDVYLCFLQKHQSETALKNVFTALRSLIYKFPSTFYEGRADMCAALCYEILKCCNSKLSSIRTEASQLLYFLMRNNFDYTGKKSFVRTHLQVIISVSQLIADVVGIGGTRFQQSLSIINNCANSDRLIKHTSFSSDVKDLTKRIRTVLMATAQMKEHENDPEMLVDLQYSLAKSYASTPELRKTWLDSMARIHVKNGDLSEAAMCYVHVTALVAEYLTRKEAVQWEPPLLPHSHSACLRRSRGGVFRQGCTAFRVITPNIDEEASMMEDVGMQDVHFNEDVLMELLEQCADGLWKAERYELIADIYKLIIPIYEKRRDFERLAHLYDTLHRAYSKVTEVMHSGRRLLGTYFRVAFFGQAAQYQFTDSETDVEGFFEDEDGKEYIYKEPKLTPLSEISQRLLKLYSDKFGSENVKMIQDSGKVNPKDLDSKYAYIQVTHVIPFFDEKELQERKTEFERSHNIRRFMFEMPFTQTGKRQGGVEEQCKRRTILTAIHCFPYVKKRIPVMYQHHTDLNPIEVAIDEMSKKVAELRQLCSSAEVDMIKLQLKLQGSVSVQVNAGPLAYARAFLDDTNTKRYPDNKVKLLKEVFRQFVEACGQALAVNERLIKEDQLEYQEEMKANYREMAKELSEIMHEQLG.

4 positions are modified to phosphoserine: serine 21, serine 32, serine 167, and serine 170. The 108-residue stretch at glycine 174–glutamine 281 folds into the PH domain. The disordered stretch occupies residues glutamate 290–aspartate 313. 2 positions are modified to phosphoserine: serine 433 and serine 443. The C2 DOCK-type domain occupies threonine 640–valine 818. Phosphoserine occurs at positions 927 and 1235. The residue at position 1241 (threonine 1241) is a Phosphothreonine. The segment at threonine 1241–serine 1282 is disordered. A phosphoserine mark is found at serine 1255, serine 1261, and serine 1264. The span at serine 1255–glutamate 1267 shows a compositional bias: polar residues. Basic and acidic residues predominate over residues arginine 1268–glutamine 1280. The DOCKER domain maps to lysine 1605–glycine 2069. The tract at residues aspartate 1693–glycine 2069 is interaction with CDC42. Coiled coils occupy residues isoleucine 1948–glycine 1982 and asparagine 2034–glutamine 2067.

Belongs to the DOCK family. In terms of assembly, homodimer. Interacts preferentially with nucleotide-depleted CDC42. In terms of tissue distribution, widely expressed, with highest expression in heart and placenta. Expressed at intermediate level in kidney, brain, lung and skeletal muscle.

Its subcellular location is the endomembrane system. Functionally, guanine nucleotide-exchange factor (GEF) that activates CDC42 by exchanging bound GDP for free GTP. Overexpression induces filopodia formation. This Homo sapiens (Human) protein is Dedicator of cytokinesis protein 9.